The following is a 142-amino-acid chain: Hemoglobin subunit alpha (142 aa).

In terms of domain architecture, Globin spans Val2 to Arg142. Ser4 is modified (phosphoserine). Residues Lys8 and Lys12 each carry the N6-succinyllysine modification. Lys17 bears the N6-acetyllysine; alternate mark. Lys17 is subject to N6-succinyllysine; alternate. Tyr25 bears the Phosphotyrosine mark. Ser36 is modified (phosphoserine). Lys41 is subject to N6-succinyllysine. Ser50 carries the post-translational modification Phosphoserine. His59 is a binding site for O2. Residue His88 participates in heme b binding. Thr109 carries the post-translational modification Phosphothreonine. Ser125 and Ser132 each carry phosphoserine. Phosphothreonine is present on residues Thr135 and Thr138. Phosphoserine is present on Ser139.

Belongs to the globin family. In terms of assembly, heterotetramer of two alpha chains and two beta chains. In terms of tissue distribution, red blood cells.

Its function is as follows. Involved in oxygen transport from the lung to the various peripheral tissues. In terms of biological role, hemopressin acts as an antagonist peptide of the cannabinoid receptor CNR1. Hemopressin-binding efficiently blocks cannabinoid receptor CNR1 and subsequent signaling. This chain is Hemoglobin subunit alpha (HBA), found in Cricetomys gambianus (Northern giant pouched rat).